Consider the following 369-residue polypeptide: 3-dehydroquinate synthase (369 aa).

Residues 72 to 77 (SGEKEK), 130 to 131 (TT), lysine 142, and lysine 151 contribute to the NAD(+) site. The Zn(2+) site is built by glutamate 184, histidine 247, and histidine 264.

Belongs to the sugar phosphate cyclases superfamily. Dehydroquinate synthase family. Co(2+) serves as cofactor. Zn(2+) is required as a cofactor. Requires NAD(+) as cofactor.

The protein localises to the cytoplasm. The enzyme catalyses 7-phospho-2-dehydro-3-deoxy-D-arabino-heptonate = 3-dehydroquinate + phosphate. Its pathway is metabolic intermediate biosynthesis; chorismate biosynthesis; chorismate from D-erythrose 4-phosphate and phosphoenolpyruvate: step 2/7. Catalyzes the conversion of 3-deoxy-D-arabino-heptulosonate 7-phosphate (DAHP) to dehydroquinate (DHQ). The protein is 3-dehydroquinate synthase of Bacillus cytotoxicus (strain DSM 22905 / CIP 110041 / 391-98 / NVH 391-98).